Consider the following 332-residue polypeptide: Serpentine receptor class gamma-3 (332 aa).

The next 7 membrane-spanning stretches (helical) occupy residues 23-43 (FAYLFTAICINYRILYVIWVS), 72-92 (LIFTRSFLYFPQLCVSFSEIV), 101-121 (IYYCLLSYLIAIKPVIHIFIA), 144-164 (IMLIVIFLAPFLVIWNVLISD), 184-204 (WASLSLMQFTLIILTVLITMV), 231-251 (AALISVGFLLEAITQSFFAFF), and 263-283 (YLRFATMDILFVGSPLVLLLV).

This sequence belongs to the nematode receptor-like protein srg family.

The protein localises to the membrane. The polypeptide is Serpentine receptor class gamma-3 (srg-3) (Caenorhabditis elegans).